A 191-amino-acid polypeptide reads, in one-letter code: RNA polymerase sigma factor CnrH (191 aa).

A Polymerase core binding motif is present at residues 49 to 62; the sequence is DVVQDTFVAAWHAL. The segment at residues 156–175 is a DNA-binding region (H-T-H motif); it reads QPEAAAVLGLSVKAVEGRIG.

It belongs to the sigma-70 factor family. ECF subfamily.

Its function is as follows. Sigma factors are initiation factors that promote the attachment of RNA polymerase to specific initiation sites and are then released. This sigma factor regulates the genes for a membrane-located efflux system that confers resistance to nickel and cobalt. In terms of biological role, cnrH alone is able to activate CNR expression, while both CnrY and CrnX are needed for nickel induction of cnrH. Binds DNA in an RNA polymerase-dependent fashion. CnrH may be controlled by a CnrYX transmembrane anti-sigma factor complex which binds CnrH in the absence of Ni(2+). If Ni(2+) appears in the periplasm, it may be bound by CnrR (CnrX); the signal then would be transmitted by CnrY into the cytoplasm and CnrH would be released. This chain is RNA polymerase sigma factor CnrH (cnrH), found in Cupriavidus metallidurans (strain ATCC 43123 / DSM 2839 / NBRC 102507 / CH34) (Ralstonia metallidurans).